The sequence spans 284 residues: Large ribosomal subunit protein uL2 (284 aa).

Residues 232-284 (RGTAMNPVDHPHGGGEGRHNGYIPRTPWGKVTKGLKTRDKRKSNKWIVKDRRK) are disordered. Over residues 240 to 250 (DHPHGGGEGRH) the composition is skewed to basic and acidic residues. Over residues 264–284 (KGLKTRDKRKSNKWIVKDRRK) the composition is skewed to basic residues.

It belongs to the universal ribosomal protein uL2 family. As to quaternary structure, part of the 50S ribosomal subunit. Forms a bridge to the 30S subunit in the 70S ribosome.

Its function is as follows. One of the primary rRNA binding proteins. Required for association of the 30S and 50S subunits to form the 70S ribosome, for tRNA binding and peptide bond formation. It has been suggested to have peptidyltransferase activity; this is somewhat controversial. Makes several contacts with the 16S rRNA in the 70S ribosome. The protein is Large ribosomal subunit protein uL2 of Chlamydia abortus (strain DSM 27085 / S26/3) (Chlamydophila abortus).